A 44-amino-acid polypeptide reads, in one-letter code: Photosystem I reaction center subunit IX (44 aa).

The helical transmembrane segment at 7 to 27 (YLSTVPVLTTLWFGSLAGLLI) threads the bilayer.

It belongs to the PsaJ family.

The protein resides in the plastid. The protein localises to the chloroplast thylakoid membrane. May help in the organization of the PsaE and PsaF subunits. The chain is Photosystem I reaction center subunit IX from Dioscorea elephantipes (Elephant's foot yam).